A 280-amino-acid polypeptide reads, in one-letter code: Large ribosomal subunit protein uL2 (280 aa).

Disordered stretches follow at residues 1-59 and 223-280; these read MAIR…GGHK and GVVM…NKKR. Basic residues-rich tracts occupy residues 45–59 and 269–280; these read VHGH…GGHK and VRRRRSNKNKKR.

The protein belongs to the universal ribosomal protein uL2 family. In terms of assembly, part of the 50S ribosomal subunit. Forms a bridge to the 30S subunit in the 70S ribosome.

One of the primary rRNA binding proteins. Required for association of the 30S and 50S subunits to form the 70S ribosome, for tRNA binding and peptide bond formation. It has been suggested to have peptidyltransferase activity; this is somewhat controversial. Makes several contacts with the 16S rRNA in the 70S ribosome. In Corynebacterium jeikeium (strain K411), this protein is Large ribosomal subunit protein uL2.